Here is a 705-residue protein sequence, read N- to C-terminus: p-hydroxybenzoic acid--AMP ligase FadD22 (705 aa).

The 79-residue stretch at 541-619 folds into the Carrier domain; it reads ERQRLVVDAV…GLAQYLEAEL (79 aa). S579 bears the O-(pantetheine 4'-phosphoryl)serine mark.

The protein belongs to the ATP-dependent AMP-binding enzyme family.

It catalyses the reaction holo-[4-hydroxyphenylalkanoate synthase] + 4-hydroxybenzoate + ATP = 4-hydroxyphenyl-[4-hydroxyphenylalkanoate synthase] + AMP + diphosphate. Its pathway is lipid metabolism; fatty acid biosynthesis. Catalyzes the adenylation of p-hydroxybenzoic acid (pHBA) to form p-hydroxybenzoic acid-AMP (pHBA-AMP), which is converted directly to p-hydroxybenzoyl-S-FadD22 (pHBA-S-FAdD22) thioester intermediate in a CoA-independent manner by attack of the phosphopantetheine thiol of FadD22. Usually, this intermediate primes the biosynthesis of the phenolphthiocerol (PPOL) by presenting the pHBA starter unit for elongation by Pks15/1, but M.tuberculosis lacks Pks15/1 due to a natural frameshift and thus is unable to produce PPOL. The polypeptide is p-hydroxybenzoic acid--AMP ligase FadD22 (fadD22) (Mycobacterium tuberculosis (strain CDC 1551 / Oshkosh)).